The chain runs to 314 residues: MAPPQVLAFGLLLAAATAAVAAAQQGCVCENYKLTTNCSLNALGQCQCTSIGAQNSVICSKLASKCLVMKAEMTGSKAGRRLKPENAIQNNDGLYDPDCDENGLFKAKQCNGTSMCWCVNTAGVRRTDKDSEISCLERVRTYWIIIELKHKTREKPYDVTSLQNALKEVITDRYQLDPKYITNILYENDIITIDLVQNSSQKTLNEVDIADVAYYFEKDVKDESLFHSKRMDLRVNGELLDLDPGQTSIYYVDEKPPEFSMQGLQAGIIAVIAVVAIAIVAGIIVLIVSTKKRRAKYEKAEIKEMGEMHRELNA.

An N-terminal signal peptide occupies residues 1 to 23 (MAPPQVLAFGLLLAAATAAVAAA). At 24–265 (QQGCVCENYK…PPEFSMQGLQ (242 aa)) the chain is on the extracellular side. Intrachain disulfides connect Cys-27–Cys-46, Cys-29–Cys-59, Cys-38–Cys-48, Cys-66–Cys-99, Cys-110–Cys-116, and Cys-118–Cys-135. A glycan (N-linked (GlcNAc...) asparagine) is linked at Asn-37. One can recognise a Thyroglobulin type-1 domain in the interval 63–135 (ASKCLVMKAE…RTDKDSEISC (73 aa)). Asn-111 carries an N-linked (GlcNAc...) asparagine glycan. Asn-198 carries N-linked (GlcNAc...) asparagine glycosylation. Residues 266-288 (AGIIAVIAVVAIAIVAGIIVLIV) form a helical membrane-spanning segment. Topologically, residues 289–314 (STKKRRAKYEKAEIKEMGEMHRELNA) are cytoplasmic.

This sequence belongs to the EPCAM family. In terms of assembly, monomer. Interacts with phosphorylated CLDN7. Post-translationally, glycosylation at Asn-198 is crucial for protein stability.

The protein localises to the lateral cell membrane. It localises to the cell junction. Its subcellular location is the tight junction. Its function is as follows. May act as a physical homophilic interaction molecule between intestinal epithelial cells (IECs) and intraepithelial lymphocytes (IELs) at the mucosal epithelium for providing immunological barrier as a first line of defense against mucosal infection. Plays a role in embryonic stem cells proliferation and differentiation. Up-regulates the expression of FABP5, MYC and cyclins A and E. The sequence is that of Epithelial cell adhesion molecule (TACSTD1) from Sus scrofa (Pig).